The chain runs to 432 residues: MVKLSIVLTPQFLSHDQGQLTKELQQHVKSVTCPCEYLRKVINSLAVYRHRETDFGVGVRDHPGQHGKTPSPQKLDNLIIIIIGFLRCYTFNILFCTSCLCVSFLKTIFWSRNGHDGSMDVQQRAWRSNRSRQKGLRSICMHTKKRVSSFRGNKIGLKDVITLRRHVETKVRAKIRKRKVTTKINRHDKINGKRKTARKQKMFQRAQELRRRAEDYHKCKIPPSARKPLCNWVRMAAAEHRHSSGLPYWLYLTAETLKNRMGRQPPPPTQQHSITDNSLSLKTPPECLLTPLPPSVDDNIKECPLAPLPPSPLPPSVDDNLKECLFVPLPPSPLPPSVDDNLKECLFVPLPPSPLPPSVDDNLKTPPLATQEAEVEKPPKPKRWRVDEVEQSPKPKRQREAEAQQLPKPKRRRLSKLRTRHCTQAWAIRINP.

Disordered stretches follow at residues 260 to 280 (RMGR…NSLS) and 353 to 420 (SPLP…LRTR). Residues 270 to 280 (QQHSITDNSLS) show a composition bias toward polar residues. A compositionally biased stretch (basic and acidic residues) spans 374-402 (EVEKPPKPKRWRVDEVEQSPKPKRQREAE). A compositionally biased stretch (basic residues) spans 408–420 (KPKRRRLSKLRTR).

The protein belongs to the NPIP family.

This is Nuclear pore complex-interacting protein family member B8 (NPIPB8) from Homo sapiens (Human).